A 410-amino-acid chain; its full sequence is Phosphoglycerate kinase (410 aa).

Residues 22–24 (DIN), Arg-39, 62–65 (HQSR), Arg-119, and Arg-159 contribute to the substrate site. Residues Glu-332 and 358 to 361 (GGHL) contribute to the ATP site.

The protein belongs to the phosphoglycerate kinase family. As to quaternary structure, homodimer.

The protein resides in the cytoplasm. It catalyses the reaction (2R)-3-phosphoglycerate + ATP = (2R)-3-phospho-glyceroyl phosphate + ADP. It participates in carbohydrate degradation; glycolysis; pyruvate from D-glyceraldehyde 3-phosphate: step 2/5. This Methanothermus fervidus (strain ATCC 43054 / DSM 2088 / JCM 10308 / V24 S) protein is Phosphoglycerate kinase (pgk).